Reading from the N-terminus, the 270-residue chain is Hairy and enhancer of split-related protein helt (270 aa).

A disordered region spans residues 1 to 24 (MNARALYKRPPPVSSSQSEASGKR). A bHLH domain is found at 59–114 (KTPVSHKVIEKRRRDRINRCLNELGKTVPMALAKQNSGKLEKAEILEMTVQYLRAL). The Orange domain occupies 136–171 (FHYGYHECMKNLVHYLTTVERMETKDTKYARILAFL).

This sequence belongs to the HEY family.

It is found in the nucleus. In terms of biological role, transcriptional repressor which binds preferentially to the canonical E box sequence 5'-CACGCG-3'. This chain is Hairy and enhancer of split-related protein helt (helt), found in Danio rerio (Zebrafish).